The chain runs to 313 residues: Ribosomal RNA small subunit methyltransferase H (313 aa).

Residues 31–33, D51, F77, D95, and Q102 each bind S-adenosyl-L-methionine; that span reads GGH.

It belongs to the methyltransferase superfamily. RsmH family.

It is found in the cytoplasm. The catalysed reaction is cytidine(1402) in 16S rRNA + S-adenosyl-L-methionine = N(4)-methylcytidine(1402) in 16S rRNA + S-adenosyl-L-homocysteine + H(+). Specifically methylates the N4 position of cytidine in position 1402 (C1402) of 16S rRNA. In Xylella fastidiosa (strain 9a5c), this protein is Ribosomal RNA small subunit methyltransferase H.